Reading from the N-terminus, the 296-residue chain is Ceramide synthase LOH2 (296 aa).

The next 6 helical transmembrane spans lie at 19–39 (VWHFQIAVYFAFGFFFLRLVL), 80–100 (LLYYAACDFFVLQVIYHEPWA), 121–141 (LYYMCQCGFYVYGVAALLAWE), 158–178 (IILLSYSYLTSFFRIGAIILA), 206–226 (FALFAVSWLLLRLIYFPFWII), and 254–274 (MLLMLLVFHIYWWYLICAMIV). Residues 71-278 (VKCKESLWKL…ICAMIVRLLK (208 aa)) enclose the TLC domain. Residues Ser-289 and Ser-291 each carry the phosphoserine modification.

As to expression, expressed ubiquitously with highest levels in pollen.

It localises to the endoplasmic reticulum membrane. It catalyses the reaction a sphingoid base + hexadecanoyl-CoA = an N-hexadecanoyl-sphingoid base + CoA + H(+). It carries out the reaction sphinganine + hexadecanoyl-CoA = N-hexadecanoylsphinganine + CoA + H(+). The catalysed reaction is sphing-4-enine + hexadecanoyl-CoA = N-hexadecanoylsphing-4-enine + CoA + H(+). The enzyme catalyses sphinga-(4E,8E)-dienine + hexadecanoyl-CoA = N-hexadecanoylsphinga-(4E,8E)-dienine + CoA + H(+). It catalyses the reaction sphinga-(4E,8Z)-dienine + hexadecanoyl-CoA = N-hexadecanoylsphinga-(4E,8Z)-dienine + CoA + H(+). It functions in the pathway sphingolipid metabolism. With respect to regulation, inhibited by the mycotoxin fumonisin B(1), a sphingosine analog mycotoxins produced by pathogenic fungi. Activated by divalent cation such as magnesium Mg(2+), zinc Zn(2+), manganese Mn(2+) and calcium Ca(2+). Its function is as follows. Prevents cell division in root meristems and promotes salicylic acid (SA) production and hypersensitive response (HR). Catalyzes the biosynthesis of ceramide sphingolipids with C(16) fatty acids, structural membrane lipids involved in membrane trafficking (e.g. early endosomes) and cell polarity (e.g. polar auxin transport related proteins); accepts only C16:0 fatty acids, but with a wide range of d18 sphingoid bases, such as sphinganine (d18:0) and palmitoyl-CoA. Mediates resistance to sphinganine-analog mycotoxins (SAMs, e.g. fumonisin B(1)) by restoring the sphingolipid biosynthesis. Could salvage the transport of GPI-anchored proteins from the endoplasmic reticulum to the Golgi apparatus in ceramides-depleted cells after SAM exposure. Contributes to hypoxic conditions tolerance (e.g. submergences), especially in the dark, by promoting the formation of very-long-chain (VLC) ceramide species (22:1, 24:1 and 26:1) and of VLC unsaturated ceramides, which are modulating CTR1-mediated ethylene signaling leading to endoplasmic reticulum (ER)-to-nucleus translocation of EIN2 and EIN3. The polypeptide is Ceramide synthase LOH2 (Arabidopsis thaliana (Mouse-ear cress)).